The chain runs to 481 residues: Multiple inositol polyphosphate phosphatase 1 (481 aa).

Residues 1–30 (MLRGARSHLPASVAPAAVLAAALLSSFARC) form the signal peptide. Residue His-89 is part of the active site. 2 N-linked (GlcNAc...) asparagine glycosylation sites follow: Asn-236 and Asn-475. Residues 478-481 (SDEL) carry the Prevents secretion from ER motif.

The protein belongs to the histidine acid phosphatase family. MINPP1 subfamily. Post-translationally, N-glycosylated. In terms of tissue distribution, widely expressed with highest levels in kidney, intestine, thymus and liver.

It is found in the endoplasmic reticulum lumen. The protein localises to the secreted. It localises to the cell membrane. The catalysed reaction is 1D-myo-inositol hexakisphosphate + H2O = 1D-myo-inositol 1,2,4,5,6-pentakisphosphate + phosphate. The enzyme catalyses 1D-myo-inositol 1,2,4,5,6-pentakisphosphate + H2O = 1D-myo-inositol 1,2,5,6-tetrakisphosphate + phosphate. It catalyses the reaction 1D-myo-inositol 1,2,5,6-tetrakisphosphate + H2O = 1D-myo-inositol 1,2,6-trisphosphate + phosphate. It carries out the reaction 1D-myo-inositol 1,2,6-trisphosphate + H2O = 1D-myo-inositol 1,2-bisphosphate + phosphate. The catalysed reaction is 1D-myo-inositol 1,2-bisphosphate + H2O = 1D-myo-inositol 2-phosphate + phosphate. The enzyme catalyses 1D-myo-inositol hexakisphosphate + H2O = 1D-myo-inositol 1,2,3,5,6-pentakisphosphate + phosphate. It catalyses the reaction 1D-myo-inositol 1,2,3,5,6-pentakisphosphate + H2O = 1D-myo-inositol 1,2,3,6-tetrakisphosphate + phosphate. It carries out the reaction 1D-myo-inositol 1,2,3,6-tetrakisphosphate + H2O = 1D-myo-inositol 1,2,3-trisphosphate + phosphate. The catalysed reaction is 1D-myo-inositol 1,2,3-trisphosphate + H2O = 1D-myo-inositol 2,3-bisphosphate + phosphate. The enzyme catalyses 1D-myo-inositol 2,3-bisphosphate + H2O = 1D-myo-inositol 2-phosphate + phosphate. It catalyses the reaction 1D-myo-inositol 1,3,4,5,6-pentakisphosphate + H2O = 1D-myo-inositol 1,4,5,6-tetrakisphosphate + phosphate. It carries out the reaction 1D-myo-inositol 1,4,5,6-tetrakisphosphate + H2O = 1D-myo-inositol 1,4,5-trisphosphate + phosphate. The catalysed reaction is (2R)-2,3-bisphosphoglycerate + H2O = (2R)-2-phosphoglycerate + phosphate. Multiple inositol polyphosphate phosphatase that hydrolyzes 1D-myo-inositol 1,3,4,5,6-pentakisphosphate (InsP5[2OH]) and 1D-myo-inositol hexakisphosphate (InsP6) to a range of less phosphorylated inositol phosphates. This regulates the availability of these various small molecule second messengers and metal chelators which control many aspects of cell physiology. Has a weak in vitro activity towards 1D-myo-inositol 1,4,5-trisphosphate which is unlikely to be physiologically relevant. By regulating intracellular inositol polyphosphates pools, which act as metal chelators, it may control the availability of intracellular calcium and iron, which are important for proper neuronal development and homeostasis. May have a dual substrate specificity, and function as a 2,3-bisphosphoglycerate 3-phosphatase hydrolyzing 2,3-bisphosphoglycerate to 2-phosphoglycerate. 2,3-bisphosphoglycerate (BPG) is formed as part of the Rapoport-Luebering glycolytic bypass and is a regulator of systemic oxygen homeostasis as the major allosteric effector of hemoglobin. The protein is Multiple inositol polyphosphate phosphatase 1 of Mus musculus (Mouse).